Consider the following 97-residue polypeptide: Coiled-coil domain-containing protein 167 (97 aa).

Residues 36–80 (LRKMELTEEGRKSLEKEKSSLSSRLSNYERELKSLRHENRKNMLL) are a coiled coil. The helical transmembrane segment at 78–95 (MLLSVAIFLLFAVGYYCW) threads the bilayer.

The protein localises to the membrane. In Xenopus tropicalis (Western clawed frog), this protein is Coiled-coil domain-containing protein 167 (ccdc167).